A 790-amino-acid polypeptide reads, in one-letter code: von Willebrand factor A domain-containing protein 2 (790 aa).

An N-terminal signal peptide occupies residues 1 to 22; sequence MRLPWVNGILAFLSSQVLQCLC. The VWFA 1 domain maps to 50-221; that stretch reads DILILLDGSN…DAVNGLATSL (172 aa). The EGF-like 1 domain maps to 295-332; it reads PDPCDSQPCKNGGTCIAEGQDKYHCVCPAGFGGDTECA. Disulfide bonds link Cys298-Cys309, Cys303-Cys319, and Cys321-Cys331. 2 VWFA domains span residues 342 to 518 and 532 to 702; these read DLLF…QKRI and DLAF…EDSV. In terms of domain architecture, EGF-like 2 spans 713-748; it reads PVNLCKPNPCMNDGVCILRQGSYRCDCRGWDGPHCE. 3 disulfides stabilise this stretch: Cys717/Cys728, Cys722/Cys737, and Cys739/Cys747. Residues 758-790 form a disordered region; sequence WPQGLHSRSRQQRHSRKRRLKSVSGSRSSRKKP. Basic residues predominate over residues 764–778; that stretch reads SRSRQQRHSRKRRLK.

Forms monomers and multimers.

It localises to the secreted. This Xenopus laevis (African clawed frog) protein is von Willebrand factor A domain-containing protein 2 (vwa2).